The primary structure comprises 540 residues: Phosphoenolpyruvate carboxykinase (ATP) (540 aa).

Residue Arg65 participates in substrate binding. N6-acetyllysine is present on Lys87. Residues Tyr207 and Lys213 each coordinate substrate. ATP is bound by residues Lys213, His232, and 248–256 (GLSGTGKTT). 2 residues coordinate Mn(2+): Lys213 and His232. A Mn(2+)-binding site is contributed by Asp269. ATP is bound by residues Glu297, Arg333, 449 to 450 (RI), and Thr455. Residue Arg333 coordinates substrate. An N6-acetyllysine modification is found at Lys523.

This sequence belongs to the phosphoenolpyruvate carboxykinase (ATP) family. Monomer. Mn(2+) is required as a cofactor.

The protein localises to the cytoplasm. The catalysed reaction is oxaloacetate + ATP = phosphoenolpyruvate + ADP + CO2. It functions in the pathway carbohydrate biosynthesis; gluconeogenesis. Functionally, involved in the gluconeogenesis. Catalyzes the conversion of oxaloacetate (OAA) to phosphoenolpyruvate (PEP) through direct phosphoryl transfer between the nucleoside triphosphate and OAA. The sequence is that of Phosphoenolpyruvate carboxykinase (ATP) from Shigella flexneri serotype 5b (strain 8401).